Consider the following 360-residue polypeptide: Fructose-bisphosphate aldolase 1 (360 aa).

Ser-63 contacts D-glyceraldehyde 3-phosphate. Asp-110 serves as the catalytic Proton donor. Residues His-111, Asp-145, Glu-175, and His-227 each coordinate Zn(2+). Gly-228 is a dihydroxyacetone phosphate binding site. His-266 contacts Zn(2+). Residue 267–269 (GGS) coordinates dihydroxyacetone phosphate.

It belongs to the class II fructose-bisphosphate aldolase family. In terms of assembly, homodimer. Zn(2+) serves as cofactor.

The catalysed reaction is beta-D-fructose 1,6-bisphosphate = D-glyceraldehyde 3-phosphate + dihydroxyacetone phosphate. Its pathway is carbohydrate degradation; glycolysis; D-glyceraldehyde 3-phosphate and glycerone phosphate from D-glucose: step 4/4. Its function is as follows. Catalyzes the aldol condensation of dihydroxyacetone phosphate (DHAP or glycerone-phosphate) with glyceraldehyde 3-phosphate (G3P) to form fructose 1,6-bisphosphate (FBP) in gluconeogenesis and the reverse reaction in glycolysis. The chain is Fructose-bisphosphate aldolase 1 (FBA1) from Paracoccidioides lutzii (strain ATCC MYA-826 / Pb01) (Paracoccidioides brasiliensis).